A 599-amino-acid polypeptide reads, in one-letter code: MALMIFSMVFMFILLFKPLVFSMMNKKCLNSTYTSTVKWAFITSMIPLMMYMNSSKEIIILNWHWLTVHTIELKMSFKLDLYSITFMPVALYVTWSIMEYSTWYMKHDPHLKRFLNYLSLFLITMLILVTANNMFQLFIGWEGVGIMSFLLIGWWYGRTDANTAALQAIIYNRVGDIGLVIAMAWFYKNSNSWELQQIFSLGTTSNLPLIGLILAAMGKSAQFGLHPWLPSAMEGPTPVSALLHSSTMVVAGVFLLIRFHPLMSNNSMIMTTILCIGAMTTLFTAICALTQNDIKKIIAFSTSSQLGLMMVTLGINQPYLSFLHICTHAFFKAMLFMCAGSIIHNLNDEQDIRKMGGISKTMPLTASAMTIGNLALMGTPFMSGFYSKDLIIESMNTSNINSWALITTLIATSLTAAYSTRLIYFVLSNSPRCNSVINMNESDNKLTSPIKRLMLGSIFAGFLLSNFIQPVNMQNMTMPFTIKITAMLVTIMGVIVAMELNLMTQYMKMYPNNYNFNFSIMLGFFPTIIHRSVSKSFLNFNQKIATSLMDYMWLEKIVPNAVVMMNNAASATTSTHKGMLKIYFMSFILSMVMLMLIMS.

17 helical membrane-spanning segments follow: residues methionine 1 to phenylalanine 21, phenylalanine 41 to leucine 61, leucine 79 to glutamate 99, phenylalanine 114 to methionine 134, leucine 137 to glycine 157, leucine 166 to phenylalanine 186, isoleucine 198 to glycine 218, threonine 237 to isoleucine 257, isoleucine 269 to leucine 289, isoleucine 297 to glutamine 317, leucine 323 to isoleucine 343, methionine 362 to methionine 382, isoleucine 400 to threonine 420, leucine 453 to methionine 473, methionine 478 to methionine 498, methionine 509 to isoleucine 529, and glycine 578 to methionine 598.

The protein belongs to the complex I subunit 5 family.

Its subcellular location is the mitochondrion inner membrane. The enzyme catalyses a ubiquinone + NADH + 5 H(+)(in) = a ubiquinol + NAD(+) + 4 H(+)(out). In terms of biological role, core subunit of the mitochondrial membrane respiratory chain NADH dehydrogenase (Complex I) that is believed to belong to the minimal assembly required for catalysis. Complex I functions in the transfer of electrons from NADH to the respiratory chain. The immediate electron acceptor for the enzyme is believed to be ubiquinone. The polypeptide is NADH-ubiquinone oxidoreductase chain 5 (ND5) (Geomys personatus (Texas pocket gopher)).